The primary structure comprises 540 residues: Transcription termination/antitermination protein NusA (540 aa).

The region spanning 144 to 214 is the S1 motif domain; it reads GQVIEARVED…SMWPITLSRS (71 aa). The KH domain maps to 319–386; the sequence is DTSIEIVVPA…QGIFGIKKRR (68 aa). The disordered stretch occupies residues 457–540; it reads VAAPTPTPAP…KQTFDNFDDL (84 aa). Positions 461–489 are enriched in pro residues; the sequence is TPTPAPQPTPAPTKVEPVPPPVSVTPKPI. Basic and acidic residues predominate over residues 512 to 522; that stretch reads DDSKTKPEKSS. The segment covering 523–540 has biased composition (polar residues); that stretch reads AKTNTPQTKQTFDNFDDL.

The protein belongs to the NusA family. In terms of assembly, monomer. Binds directly to the core enzyme of the DNA-dependent RNA polymerase and to nascent RNA.

It is found in the cytoplasm. Participates in both transcription termination and antitermination. In Mycoplasma pneumoniae (strain ATCC 29342 / M129 / Subtype 1) (Mycoplasmoides pneumoniae), this protein is Transcription termination/antitermination protein NusA.